A 944-amino-acid polypeptide reads, in one-letter code: Valine--tRNA ligase (944 aa).

Positions 43–53 (PNVTGTLHMGH) match the 'HIGH' region motif. Positions 550–554 (KMSKS) match the 'KMSKS' region motif. K553 is an ATP binding site. Residues 878–944 (LVDMDAERTR…TGLREQRAKL (67 aa)) are a coiled coil.

It belongs to the class-I aminoacyl-tRNA synthetase family. ValS type 1 subfamily. In terms of assembly, monomer.

Its subcellular location is the cytoplasm. It carries out the reaction tRNA(Val) + L-valine + ATP = L-valyl-tRNA(Val) + AMP + diphosphate. Catalyzes the attachment of valine to tRNA(Val). As ValRS can inadvertently accommodate and process structurally similar amino acids such as threonine, to avoid such errors, it has a 'posttransfer' editing activity that hydrolyzes mischarged Thr-tRNA(Val) in a tRNA-dependent manner. The sequence is that of Valine--tRNA ligase from Xanthomonas campestris pv. campestris (strain B100).